The chain runs to 365 residues: Dehydroprecondylocarpine acetate synthase (365 aa).

Positions 105, 108, 111, and 119 each coordinate Zn(2+). N-linked (GlcNAc...) asparagine glycans are attached at residues asparagine 142 and asparagine 147. The NADP(+) site is built by leucine 194, glycine 196, leucine 197, serine 216, threonine 217, threonine 218, lysine 221, leucine 279, alanine 281, serine 303, alanine 305, and arginine 350.

This sequence belongs to the zinc-containing alcohol dehydrogenase family. As to quaternary structure, homodimer. Interaction with catharanthine synthase (CS) and tabersonine synthase (TS). The cofactor is Zn(2+).

Its subcellular location is the cytoplasm. The protein localises to the cytosol. It carries out the reaction dihydroprecondylocarpine acetate + NADP(+) = precondylocarpine acetate + NADPH + H(+). Its pathway is alkaloid biosynthesis. Functionally, component of the seco-iridoid and derivatives monoterpenoid indole alkaloids (MIAs, e.g. vinblastine, catharanthine, tabersonine, vincadifformine, vindoline, vincristine, quinine and strychnine) biosynthesis pathway. Catalyzes the non-canonical 1,4-reduction of an alpha,beta-unsaturated iminium moiety; by contrast with the classic alcohol dehydrogenase mechanism, this reaction does not require a catalytic zinc or proton relay. Converts precondylocarpine acetate to dihydroprecondylocarpine acetate, that is spontaneously converted into dehydrosecodine intermediate, precursor of angryline. May also trigger the non-stereoselective 1,4-reduction reaction at C15 of dehydrosecodine leading to the production of secodine, a precursor of vincadifformine. The protein is Dehydroprecondylocarpine acetate synthase of Catharanthus roseus (Madagascar periwinkle).